The sequence spans 188 residues: Large ribosomal subunit protein bL32m (188 aa).

Residues cysteine 110, cysteine 113, cysteine 123, and cysteine 126 each contribute to the Zn(2+) site. Residues 162 to 188 (GETPSEHDQGKRIIERERKRPSWFTQN) are disordered. The span at 165–181 (PSEHDQGKRIIERERKR) shows a compositional bias: basic and acidic residues.

It belongs to the bacterial ribosomal protein bL32 family. As to quaternary structure, component of the mitochondrial ribosome large subunit (39S) which comprises a 16S rRNA and about 50 distinct proteins. MRPL32 precursor is processed by the m-AAA protease (composed of AFG3L2 and SPG7), which cleaves the N-terminal transit peptide. Cleavage by the m-AAA protease takes place prior to assembly into the large subunit, an essential step for mitochondrial ribosome (mitoribosome) assembly. Proper processing by the m-AAA protease is dependent on the zinc-binding region within the tightly folded C-terminal domain of MRPL32: zinc-dependent folding halts degradation initiated from the N-terminus and triggers the release of mature MRPL32.

The protein resides in the mitochondrion. Component of the mitochondrial large ribosomal subunit (mt-LSU). The mitochondrial ribosome (mitoribosome) is a large ribonucleoprotein complex responsible for the synthesis of proteins inside mitochondria. The sequence is that of Large ribosomal subunit protein bL32m (MRPL32) from Bos taurus (Bovine).